Reading from the N-terminus, the 647-residue chain is Pumilio homolog 3 (647 aa).

The span at 1–10 (MEVKGKKKFT) shows a compositional bias: basic residues. A disordered region spans residues 1 to 123 (MEVKGKKKFT…KKKKELKQSR (123 aa)). Lys-33 carries the post-translational modification N6-acetyllysine. Residues 59-68 (PGKKGVKQFK) are compositionally biased toward basic residues. The segment covering 102-123 (SGAKKPKWDDFKKKKKELKQSR) has biased composition (basic and acidic residues). Residues 105-117 (KKPKWDDFKKKKK) carry the Nuclear localization signal motif. The PUM-HD domain maps to 142 to 509 (ESLRRKDCDK…VVLDKSACVL (368 aa)). Pumilio repeat units lie at residues 176-211 (HDST…LSKA), 212-247 (KYSR…MLRH), 248-276 (SEAS…ELYG), 288-324 (PTLD…VIKH), 325-360 (SLVH…LAHT), 361-396 (HDGA…VANG), 397-434 (QYSH…IVND), 435-503 (KYGR…VVLD), 504-550 (KSAC…VAEH), 551-595 (PAGH…WASI), and 596-635 (NRGA…KSSS).

As to quaternary structure, interacts with PARP1 (via catalytic domain). As to expression, in the adult eye, expressed primarily in retinal ganglion cells and, to a lesser extent, in the pigmented cells.

Its subcellular location is the nucleus. The protein resides in the nucleolus. It is found in the nucleoplasm. The protein localises to the chromosome. Inhibits the poly(ADP-ribosyl)ation activity of PARP1 and the degradation of PARP1 by CASP3 following genotoxic stress. Binds to double-stranded RNA or DNA without sequence specificity. Involved in development of the eye and of primordial germ cells. In Mus musculus (Mouse), this protein is Pumilio homolog 3.